A 20-amino-acid chain; its full sequence is Agglutinin beta-3 chain (20 aa).

A disordered region spans residues 1–20 (GPNGKSQSIIVGPWGDRVTN).

The protein belongs to the jacalin lectin family. In terms of assembly, formed of four alpha chains and four beta chains.

Its function is as follows. D-galactose-specific lectin, binds the T-antigen structure Gal-beta1,3-GalNAc. The chain is Agglutinin beta-3 chain from Maclura pomifera (Osage orange).